The sequence spans 1566 residues: MTADKDKDKDKEKDRDRDRDREREKRDKARESENSRPRRSCTLEGGAKNYAESDHSEDEDNDNNSATAEESTKKNKKKPPKKKSRYERTDTGEITSYITEDDVVYRPGDCVYIESRRPNTPYFICSIQDFKLVHNSQACCRSPTPALCDPPACSLPVASQPPQHLSEAGRGPVGSKRDHLLMNVKWYYRQSEVPDSVYQHLVQDRHNENDSGRELVITDPVIKNRELFISDYVDTYHAAALRGKCNISHFSDIFAAREFKARVDSFFYILGYNPETRRLNSTQGEIRVGPSHQAKLPDLQPFPSPDGDTVTQHEELVWMPGVNDCDLLMYLRAARSMAAFAGMCDGGSTEDGCVAASRDDTTLNALNTLHESGYDAGKALQRLVKKPVPKLIEKCWTEDEVKRFVKGLRQYGKNFFRIRKELLPNKETGELITFYYYWKKTPEAASSRAHRRHRRQAVFRRIKTRTASTPVNTPSRPPSSEFLDLSSASEDDFDSEDSEQELKGYACRHCFTTTSKDWHHGGRENILLCTDCRIHFKKYGELPPIEKPVDPPPFMFKPVKEEDDGLSGKHSMRTRRSRGSMSTLRSGRKKQPASPDGRTSPINEDIRSSGRNSPSAASTSSNDSKAETVKKSAKKVKEEASSPLKSNKRQREKVASDTEEADRTSSKKTKTQEISRPNSPSEGEGESSDSRSVNDEGSSDPKDIDQDNRSTSPSIPSPQDNESDSDSSAQQQMLQAQPPALQAPTGVTPAPSSAPPGTPQLPTPGPTPSATAVPPQGSPTASQAPNQPQAPTAPVPHTHIQQAPALHPQRPPSPHPPPHPSPHPPLQPLTGSAGQPSAPSHAQPPLHGQGPPGPHSLQAGPLLQHPGPPQPFGLPPQASQGQAPLGTSPAAAYPHTSLQLPASQSALQSQQPPREQPLPPAPLAMPHIKPPPTTPIPQLPAPQAHKHPPHLSGPSPFSMNANLPPPPALKPLSSLSTHHPPSAHPPPLQLMPQSQPLPSSPAQPPGLTQSQNLPPPPASHPPTGLHQVAPQPPFAQHPFVPGGPPPITPPTCPSTSTPPAGPGTSAQPPCSGAAASGGSIAGGSSCPLPTVQIKEEALDDAEEPESPPPPPRSPSPEPTVVDTPSHASQSARFYKHLDRGYNSCARTDLYFMPLAGSKLAKKREEAIEKAKREAEQKAREEREREKEKEKEREREREREREAERAAKASSSAHEGRLSDPQLSGPGHMRPSFEPPPTTIAAVPPYIGPDTPALRTLSEYARPHVMSPTNRNHPFYMPLNPTDPLLAYHMPGLYNVDPTIRERELREREIREREIRERELRERMKPGFEVKPPELDPLHPAANPMEHFARHSALTIPPTAGPHPFASFHPGLNPLERERLALAGPQLRPEMSYPDRLAAERIHAERMASLTSDPLARLQMFNVTPHHHQHSHIHSHLHLHQQDPLHQGSAGPVHPLVDPLTAGPHLARFPYPPGTLPNPLLGQPPHEHEMLRHPVFGTPYPRDLPGAIPPPMSAAHQLQAMHAQSAELQRLAMEQQWLHGHPHMHGGHLPSQEDYYSRLKKEGDKQL.

Basic and acidic residues predominate over residues 1–36; sequence MTADKDKDKDKEKDRDRDRDREREKRDKARESENSR. The segment at 1-90 is disordered; that stretch reads MTADKDKDKD…KKKSRYERTD (90 aa). 2 positions are modified to phosphoserine: Ser-53 and Ser-56. A compositionally biased stretch (basic residues) spans 74–85; the sequence is KNKKKPPKKKSR. The 181-residue stretch at 103 to 283 folds into the BAH domain; sequence VVYRPGDCVY…PETRRLNSTQ (181 aa). Position 120 is a phosphothreonine (Thr-120). Ser-142 and Ser-304 each carry phosphoserine. Residues 284 to 387 enclose the ELM2 domain; it reads GEIRVGPSHQ…KALQRLVKKP (104 aa). The 53-residue stretch at 391–443 folds into the SANT domain; that stretch reads LIEKCWTEDEVKRFVKGLRQYGKNFFRIRKELLPNKETGELITFYYYWKKTPE. The tract at residues 464–495 is disordered; the sequence is TRTASTPVNTPSRPPSSEFLDLSSASEDDFDS. Over residues 465-474 the composition is skewed to polar residues; sequence RTASTPVNTP. A compositionally biased stretch (low complexity) spans 479–488; that stretch reads SSEFLDLSSA. The GATA-type zinc-finger motif lies at 507–532; sequence CRHCFTTTSKDWHHGGRENILLCTDC. The interval 542 to 1133 is disordered; sequence LPPIEKPVDP…PSHASQSARF (592 aa). Residue Lys-560 forms a Glycyl lysine isopeptide (Lys-Gly) (interchain with G-Cter in SUMO2) linkage. Residues Ser-594, Ser-600, and Ser-613 each carry the phosphoserine modification. Residues 609–623 are compositionally biased toward low complexity; sequence SGRNSPSAASTSSND. The span at 624–640 shows a compositional bias: basic and acidic residues; the sequence is SKAETVKKSAKKVKEEA. Residue Lys-637 forms a Glycyl lysine isopeptide (Lys-Gly) (interchain with G-Cter in SUMO2) linkage. Residues Ser-642, Ser-656, Ser-675, and Ser-679 each carry the phosphoserine modification. Positions 652 to 673 are enriched in basic and acidic residues; that stretch reads EKVASDTEEADRTSSKKTKTQE. Over residues 688 to 708 the composition is skewed to basic and acidic residues; sequence SDSRSVNDEGSSDPKDIDQDN. Over residues 709-720 the composition is skewed to polar residues; the sequence is RSTSPSIPSPQD. Residues 726-751 show a composition bias toward low complexity; that stretch reads DSSAQQQMLQAQPPALQAPTGVTPAP. Residues 752 to 767 are compositionally biased toward pro residues; that stretch reads SSAPPGTPQLPTPGPT. Over residues 778–796 the composition is skewed to low complexity; it reads SPTASQAPNQPQAPTAPVP. Over residues 809 to 827 the composition is skewed to pro residues; it reads QRPPSPHPPPHPSPHPPLQ. Residues 829 to 840 show a composition bias toward polar residues; it reads LTGSAGQPSAPS. Composition is skewed to low complexity over residues 843-865 and 897-913; these read QPPLHGQGPPGPHSLQAGPLLQH and SLQLPASQSALQSQQPP. Pro residues predominate over residues 914-940; the sequence is REQPLPPAPLAMPHIKPPPTTPIPQLP. Over residues 970-980 the composition is skewed to low complexity; that stretch reads KPLSSLSTHHP. Pro residues predominate over residues 1030 to 1052; sequence PQPPFAQHPFVPGGPPPITPPTC. Residues 1053-1085 are compositionally biased toward low complexity; it reads PSTSTPPAGPGTSAQPPCSGAAASGGSIAGGSS. Residues Ser-1106, Ser-1113, and Ser-1115 each carry the phosphoserine modification. Positions 1106 to 1117 are enriched in pro residues; it reads SPPPPPRSPSPE. A Phosphothreonine modification is found at Thr-1119. Positions 1156 to 1211 form a coiled coil; it reads GSKLAKKREEAIEKAKREAEQKAREEREREKEKEKEREREREREREAERAAKASSS. At Lys-1158 the chain carries N6-acetyllysine. A compositionally biased stretch (basic and acidic residues) spans 1162–1206; sequence KREEAIEKAKREAEQKAREEREREKEKEKEREREREREREAERAA. Residues 1162–1246 form a disordered region; sequence KREEAIEKAK…TTIAAVPPYI (85 aa). A Phosphotyrosine modification is found at Tyr-1259. Phosphoserine is present on Ser-1266.

Interacts with HDAC1. Interacts with ATN1. Interaction with ATN1 is improved when the poly-Gln region of ATN1 is extended. Interacts with FAT1. Widely expressed. Expressed in tumor cell lines.

The protein resides in the nucleus. Its function is as follows. Plays a role as a transcriptional repressor during development. May play a role in the control of cell survival. Overexpression of RERE recruits BAX to the nucleus particularly to POD and triggers caspase-3 activation, leading to cell death. The polypeptide is Arginine-glutamic acid dipeptide repeats protein (RERE) (Homo sapiens (Human)).